A 126-amino-acid polypeptide reads, in one-letter code: Small ribosomal subunit protein uS12 (126 aa).

A disordered region spans residues 1–28 (MPTINQLVRKGRQSETTKSKSPALQDCP). Asp89 bears the 3-methylthioaspartic acid mark. The disordered stretch occupies residues 103–126 (DTQGVKDRKQARSKYGAKRAKAAK). Basic residues predominate over residues 113-126 (ARSKYGAKRAKAAK).

This sequence belongs to the universal ribosomal protein uS12 family. As to quaternary structure, part of the 30S ribosomal subunit. Contacts proteins S8 and S17. May interact with IF1 in the 30S initiation complex.

In terms of biological role, with S4 and S5 plays an important role in translational accuracy. Interacts with and stabilizes bases of the 16S rRNA that are involved in tRNA selection in the A site and with the mRNA backbone. Located at the interface of the 30S and 50S subunits, it traverses the body of the 30S subunit contacting proteins on the other side and probably holding the rRNA structure together. The combined cluster of proteins S8, S12 and S17 appears to hold together the shoulder and platform of the 30S subunit. This Burkholderia orbicola (strain MC0-3) protein is Small ribosomal subunit protein uS12.